We begin with the raw amino-acid sequence, 261 residues long: Ribonuclease HII (261 aa).

The 189-residue stretch at Lys71–Ser259 folds into the RNase H type-2 domain. Asp77, Glu78, and Asp169 together coordinate a divalent metal cation.

The protein belongs to the RNase HII family. The cofactor is Mn(2+). Mg(2+) is required as a cofactor.

Its subcellular location is the cytoplasm. It catalyses the reaction Endonucleolytic cleavage to 5'-phosphomonoester.. Its function is as follows. Endonuclease that specifically degrades the RNA of RNA-DNA hybrids. This chain is Ribonuclease HII, found in Listeria monocytogenes serovar 1/2a (strain ATCC BAA-679 / EGD-e).